A 346-amino-acid polypeptide reads, in one-letter code: Probable alcohol dehydrogenase AdhA (346 aa).

Zn(2+) contacts are provided by C51, H73, C109, C112, C115, C123, and C165.

It belongs to the zinc-containing alcohol dehydrogenase family. Requires Zn(2+) as cofactor.

It carries out the reaction a primary alcohol + NAD(+) = an aldehyde + NADH + H(+). The catalysed reaction is a secondary alcohol + NAD(+) = a ketone + NADH + H(+). The chain is Probable alcohol dehydrogenase AdhA (adhA) from Mycobacterium tuberculosis (strain CDC 1551 / Oshkosh).